The chain runs to 1257 residues: Liprin-alpha-2 (1257 aa).

The disordered stretch occupies residues Met1–Ser29. A compositionally biased stretch (low complexity) spans Ser16 to Asp26. Coiled-coil stretches lie at residues Ser29–Met154 and Lys185–Gly235. Ser236 carries the post-translational modification Phosphoserine. Thr237 carries the phosphothreonine modification. Ser239 bears the Phosphoserine mark. Coiled-coil stretches lie at residues Thr264–Glu541 and His643–Leu695. The disordered stretch occupies residues Gly439 to Lys463. A phosphoserine mark is found at Ser687 and Ser689. Residues Thr709–Pro725 show a composition bias toward low complexity. 2 disordered regions span residues Thr709 to Arg738 and Glu759 to Ile834. Over residues Thr787–Ala802 the composition is skewed to polar residues. Residues Ser817 and Ser820 each carry the phosphoserine modification. SAM domains are found at residues Trp898 to Leu964, Asn1020 to Leu1084, and Trp1108 to Leu1177. Residues Leu1081–Val1107 adopt a coiled-coil conformation.

It belongs to the liprin family. Liprin-alpha subfamily. As to quaternary structure, forms homodimers and heterodimers with liprins-alpha and liprins-beta. Interacts with the second PTPase domain of PTPRD, PTPRF and PTPRS. Interacts with KIF1A; the interaction decreases in presence of calcium.

The protein resides in the cytoplasm. It localises to the cell surface. The protein localises to the cell projection. It is found in the dendritic spine. Alters PTPRF cellular localization and induces PTPRF clustering. May regulate the disassembly of focal adhesions. May localize receptor-like tyrosine phosphatases type 2A at specific sites on the plasma membrane, possibly regulating their interaction with the extracellular environment and their association with substrates. In neuronal cells, is a scaffolding protein in the dendritic spines which acts as immobile postsynaptic post able to recruit KIF1A-driven dense core vesicles to dendritic spines. In Mus musculus (Mouse), this protein is Liprin-alpha-2 (Ppfia2).